A 181-amino-acid polypeptide reads, in one-letter code: Adenylate kinase (181 aa).

G10–T15 contributes to the ATP binding site. Residues S30–V59 form an NMP region. AMP-binding positions include T31, R36, D57–V59, G85–R88, and Q92. Positions G126–D132 are LID. R127 lines the ATP pocket. R129 and R140 together coordinate AMP. Position 166 (G166) interacts with ATP.

This sequence belongs to the adenylate kinase family. In terms of assembly, monomer.

The protein resides in the cytoplasm. The enzyme catalyses AMP + ATP = 2 ADP. Its pathway is purine metabolism; AMP biosynthesis via salvage pathway; AMP from ADP: step 1/1. Functionally, catalyzes the reversible transfer of the terminal phosphate group between ATP and AMP. Plays an important role in cellular energy homeostasis and in adenine nucleotide metabolism. The protein is Adenylate kinase of Mycolicibacterium vanbaalenii (strain DSM 7251 / JCM 13017 / BCRC 16820 / KCTC 9966 / NRRL B-24157 / PYR-1) (Mycobacterium vanbaalenii).